Here is a 906-residue protein sequence, read N- to C-terminus: MLEKTFDPQSVEPRLYAAWEASGAFKPAEDPNAEPFVIVIPPPNVTGSLHIGHALNNTLQDVLTRFHRMRGKAALWLPGTDHAGIATQMVVERQLAAAGNIGRRDMGREAFVDKVWEWKAESGGAITNQLRRLGASCDWSRERFTLDEGLSAAVRKVFVQLYKQNLLYRDKRLVNWDPQFQTAISDLEVEQKEVDGAYWHFAYPLADGVTYQHPIAFDEDGKATEFETRDYIVVATTRPETMLGDTGVAVHPDDERYKGLVGKFVTLPIVGRRIPIVADDYADPTKGSGAVKITPAHDFNDFGVGKRAGLEAINILTVEAKLNDSVPAEYVGMDRFVARKAIVARAEEEGWLKEIEKTKHMVPHGDRSGVVIEPFLTDQWYVDAKTLAQPALKAVETGETIFEPKHWEKTYFEWLRNIEPWCVSRQLWWGHRIPAWFGPEGSIFVEESEEAAYAAARAQFGADVQLTQDEDVLDTWFSSALWPFSTLGWPEKTSDLERFYPTSTLVTGFDIIFFWVARMMMMGIHFMGEAPFKQVFINALVRDEKGAKMSKSKGNVMDPLILIDELGCDAVRFTLTAMSGQARDIKLSKQRIEGYRNFGTKLWNASRFAQMNECVRVEGFDPSTVQQPINKWIRGETVKTVAEVTKALEAPSFDEAAGALYRFVWNVFCDWYLELAKPILNGDDAAAKAETRATAAWALDVILKLLHPVMPFITEELWEKTAEFGPARETMLISAKWPELPADWIDAEAEAEIGWLVETVGEIRSIRAEMNVPPSAKPGLTIVGAGPETKARLARHRDLLLTLARLDAVREADAAPAGSAPVVMGEATGALGVAEFIDVAAEKARLTKDIAGHAGEIEKVNKKLGNPDFLARAKEEVVEENRERLAEAEAAKAKLEAALSRLASVG.

A 'HIGH' region motif is present at residues 43 to 53; that stretch reads PNVTGSLHIGH. The 'KMSKS' region signature appears at 548–552; that stretch reads KMSKS. Lys551 lines the ATP pocket. Positions 842–905 form a coiled coil; that stretch reads EKARLTKDIA…EAALSRLASV (64 aa).

It belongs to the class-I aminoacyl-tRNA synthetase family. ValS type 1 subfamily. Monomer.

Its subcellular location is the cytoplasm. The catalysed reaction is tRNA(Val) + L-valine + ATP = L-valyl-tRNA(Val) + AMP + diphosphate. Its function is as follows. Catalyzes the attachment of valine to tRNA(Val). As ValRS can inadvertently accommodate and process structurally similar amino acids such as threonine, to avoid such errors, it has a 'posttransfer' editing activity that hydrolyzes mischarged Thr-tRNA(Val) in a tRNA-dependent manner. The polypeptide is Valine--tRNA ligase (Caulobacter vibrioides (strain ATCC 19089 / CIP 103742 / CB 15) (Caulobacter crescentus)).